The sequence spans 252 residues: Cell division protein ZapD (252 aa).

Belongs to the ZapD family. In terms of assembly, interacts with FtsZ.

It localises to the cytoplasm. Functionally, cell division factor that enhances FtsZ-ring assembly. Directly interacts with FtsZ and promotes bundling of FtsZ protofilaments, with a reduction in FtsZ GTPase activity. The polypeptide is Cell division protein ZapD (Ralstonia pickettii (strain 12J)).